We begin with the raw amino-acid sequence, 250 residues long: Small ribosomal subunit protein uS2 (250 aa).

This sequence belongs to the universal ribosomal protein uS2 family.

This is Small ribosomal subunit protein uS2 from Delftia acidovorans (strain DSM 14801 / SPH-1).